A 629-amino-acid chain; its full sequence is tRNA uridine 5-carboxymethylaminomethyl modification enzyme MnmG (629 aa).

Residues 14–19 (GAGHAG), V126, and S181 each bind FAD. Residue 273-287 (GPRYCPSIEDKVVRF) participates in NAD(+) binding. Residue Q370 participates in FAD binding.

This sequence belongs to the MnmG family. Homodimer. Heterotetramer of two MnmE and two MnmG subunits. FAD is required as a cofactor.

The protein localises to the cytoplasm. In terms of biological role, NAD-binding protein involved in the addition of a carboxymethylaminomethyl (cmnm) group at the wobble position (U34) of certain tRNAs, forming tRNA-cmnm(5)s(2)U34. The sequence is that of tRNA uridine 5-carboxymethylaminomethyl modification enzyme MnmG from Bacillus cereus (strain ATCC 10987 / NRS 248).